The chain runs to 1396 residues: Major capsid protein (1396 aa).

It belongs to the herpesviridae major capsid protein family. Homomultimer. Makes the hexons and eleven out of twelve pentons. Interacts with triplex proteins 1/TRX1 and 2/TRX2; adjacent capsomers are linked together in groups of three by triplexes, heterotrimeric complexes composed of one molecule of TRX1 and two molecules of TRX2. Interacts with scaffold protein; this interaction allows efficient MCP transport to the host nucleus. Interacts with capsid vertex component 2/CVC2. Interacts with the small capsomere-interacting protein/SCP.

The protein localises to the virion. It is found in the host nucleus. Its function is as follows. Self-assembles to form an icosahedral capsid with a T=16 symmetry, about 200 nm in diameter, and consisting of 150 hexons and 12 pentons (total of 162 capsomers). Hexons form the edges and faces of the capsid and are each composed of six MCP molecules. In contrast, one penton is found at each of the 12 vertices. Eleven of the pentons are MCP pentamers, while the last vertex is occupied by the portal complex. The capsid is surrounded by a layer of proteinaceous material designated the tegument which, in turn, is enclosed in an envelope of host cell-derived lipids containing virus-encoded glycoproteins. This is Major capsid protein from Varicella-zoster virus (strain Dumas) (HHV-3).